The sequence spans 115 residues: ER exit protein (115 aa).

It belongs to the STEEP1 family.

May stimulate membrane curvature formation and subsequent endoplasmic reticulum exit site (ERES) establishment. In Schizosaccharomyces pombe (strain 972 / ATCC 24843) (Fission yeast), this protein is ER exit protein.